A 267-amino-acid chain; its full sequence is Hydroxyethylthiazole kinase (267 aa).

M48 is a substrate binding site. ATP contacts are provided by R124 and S170. Position 197 (G197) interacts with substrate.

This sequence belongs to the Thz kinase family. Mg(2+) serves as cofactor.

The catalysed reaction is 5-(2-hydroxyethyl)-4-methylthiazole + ATP = 4-methyl-5-(2-phosphooxyethyl)-thiazole + ADP + H(+). It participates in cofactor biosynthesis; thiamine diphosphate biosynthesis; 4-methyl-5-(2-phosphoethyl)-thiazole from 5-(2-hydroxyethyl)-4-methylthiazole: step 1/1. Functionally, catalyzes the phosphorylation of the hydroxyl group of 4-methyl-5-beta-hydroxyethylthiazole (THZ). The sequence is that of Hydroxyethylthiazole kinase from Leptospira biflexa serovar Patoc (strain Patoc 1 / Ames).